A 280-amino-acid polypeptide reads, in one-letter code: Dexamethasone-induced Ras-related protein 1 (280 aa).

At cysteine 11 the chain carries S-nitrosocysteine. GTP is bound at residue 31–38 (GSSKVGKT). The Effector region motif lies at 53–61 (YTPTIEDFH). GTP-binding positions include 78 to 82 (DTSGN) and 145 to 148 (NKGD). A Cysteine methyl ester modification is found at cysteine 277. A lipid anchor (S-farnesyl cysteine) is attached at cysteine 277. The propeptide at 278–280 (VIS) is removed in mature form.

Belongs to the small GTPase superfamily. RasD family. As to quaternary structure, forms a ternary complex with CAPON and NOS1. Component of a complex, at least composed of APBB1, RASD1/DEXRAS1 and APP. Interacts with APBB1/FE65. Forms. S-nitrosylation stimulates guanine-nucleotide exchange activity. As to expression, prominently found in brain at both mRNA and protein levels. Moderate expression in testis and lung. Slightly expressed in heart, spleen, skeletal muscle, liver and kidney.

The protein localises to the cell membrane. Its subcellular location is the cytoplasm. It is found in the perinuclear region. It localises to the nucleus. In terms of biological role, small GTPase. Negatively regulates the transcription regulation activity of the APBB1/FE65-APP complex via its interaction with APBB1/FE65. The sequence is that of Dexamethasone-induced Ras-related protein 1 (Rasd1) from Rattus norvegicus (Rat).